Reading from the N-terminus, the 383-residue chain is S-adenosylmethionine synthase (383 aa).

Histidine 15 contacts ATP. Residue aspartate 17 coordinates Mg(2+). Glutamate 43 is a binding site for K(+). Positions 56 and 99 each coordinate L-methionine. The interval 99–109 is flexible loop; that stretch reads QSPDINQGVDR. Residues 164-166, 230-231, aspartate 239, 245-246, alanine 262, and lysine 266 each bind ATP; these read DAK, RF, and RK. Residue aspartate 239 participates in L-methionine binding. Lysine 270 contributes to the L-methionine binding site.

This sequence belongs to the AdoMet synthase family. In terms of assembly, homotetramer; dimer of dimers. Mg(2+) is required as a cofactor. The cofactor is K(+).

It is found in the cytoplasm. It catalyses the reaction L-methionine + ATP + H2O = S-adenosyl-L-methionine + phosphate + diphosphate. Its pathway is amino-acid biosynthesis; S-adenosyl-L-methionine biosynthesis; S-adenosyl-L-methionine from L-methionine: step 1/1. In terms of biological role, catalyzes the formation of S-adenosylmethionine (AdoMet) from methionine and ATP. The overall synthetic reaction is composed of two sequential steps, AdoMet formation and the subsequent tripolyphosphate hydrolysis which occurs prior to release of AdoMet from the enzyme. The polypeptide is S-adenosylmethionine synthase (Pectobacterium atrosepticum (strain SCRI 1043 / ATCC BAA-672) (Erwinia carotovora subsp. atroseptica)).